Here is a 224-residue protein sequence, read N- to C-terminus: UPF0758 protein PFLU_5982 (224 aa).

Positions 102-224 (VLESPKAVRD…PLSMAEYGWL (123 aa)) constitute an MPN domain. Positions 173, 175, and 186 each coordinate Zn(2+). The JAMM motif signature appears at 173-186 (HNHPSGSLEPSAAD).

Belongs to the UPF0758 family.

The polypeptide is UPF0758 protein PFLU_5982 (Pseudomonas fluorescens (strain SBW25)).